A 61-amino-acid polypeptide reads, in one-letter code: Antimicrobial peptide 1 (61 aa).

The N-terminal stretch at 1 to 24 (LPVAFLKFAIVLILFIAMSAMIEA) is a signal peptide. Gln25 is modified (pyrrolidone carboxylic acid). 3 disulfides stabilise this stretch: Cys26–Cys43, Cys33–Cys47, and Cys42–Cys58.

The protein belongs to the AMP family. As to quaternary structure, homodimer. In terms of processing, three disulfide bonds are present. Found only in seeds.

It is found in the secreted. In terms of biological role, possesses antifungal activity and is also active on two tested Gram-positive bacteria but is non-toxic for Gram-negative bacteria and cultured human cells. In Mirabilis jalapa (Garden four-o'clock), this protein is Antimicrobial peptide 1 (AMP1).